A 467-amino-acid chain; its full sequence is UDP-N-acetylmuramoylalanine--D-glutamate ligase (467 aa).

ATP is bound at residue 118–124; sequence GTNGKTT.

The protein belongs to the MurCDEF family.

It is found in the cytoplasm. It catalyses the reaction UDP-N-acetyl-alpha-D-muramoyl-L-alanine + D-glutamate + ATP = UDP-N-acetyl-alpha-D-muramoyl-L-alanyl-D-glutamate + ADP + phosphate + H(+). It participates in cell wall biogenesis; peptidoglycan biosynthesis. Its function is as follows. Cell wall formation. Catalyzes the addition of glutamate to the nucleotide precursor UDP-N-acetylmuramoyl-L-alanine (UMA). This chain is UDP-N-acetylmuramoylalanine--D-glutamate ligase, found in Streptomyces avermitilis (strain ATCC 31267 / DSM 46492 / JCM 5070 / NBRC 14893 / NCIMB 12804 / NRRL 8165 / MA-4680).